Here is a 276-residue protein sequence, read N- to C-terminus: CASP-like protein 4A3 (276 aa).

Residues 1-13 are compositionally biased toward polar residues; it reads MPSMSPSSISTEK. The segment at 1–76 is disordered; it reads MPSMSPSSIS…PVKIEETPSP (76 aa). The Cytoplasmic portion of the chain corresponds to 1-126; the sequence is MPSMSPSSIS…RRSRREEIVK (126 aa). Residues 43-72 are compositionally biased toward basic and acidic residues; it reads SLDHSSDSEKEDEKRRPESRRNKNPVKIEE. Residues 127-147 form a helical membrane-spanning segment; the sequence is FVALGFRLSEVVLALISFSIM. The Extracellular portion of the chain corresponds to 148–167; that stretch reads AADKTKGWSGDSFDRYKEYR. The helical transmembrane segment at 168–188 threads the bilayer; sequence FCLSVNVVAFIYASFQACDLA. At 189 to 205 the chain is on the cytoplasmic side; the sequence is YHLVKEKHLISHHLRPL. Residues 206-226 traverse the membrane as a helical segment; it reads FEFIIDQVLAYLLMCASTAAV. At 227 to 244 the chain is on the extracellular side; it reads TRVDDWVSNWGKDDFTEM. The chain crosses the membrane as a helical span at residues 245-265; sequence ASASIAMSFLTFLAFAFSSLI. Topologically, residues 266–276 are cytoplasmic; sequence SGYNLFNQDSL.

This sequence belongs to the Casparian strip membrane proteins (CASP) family. Homodimer and heterodimers.

It localises to the cell membrane. This is CASP-like protein 4A3 from Arabidopsis lyrata subsp. lyrata (Lyre-leaved rock-cress).